A 380-amino-acid chain; its full sequence is M-protease (380 aa).

The N-terminal stretch at 1 to 27 is a signal peptide; the sequence is MKKPLGKIVASTALLISVAFSSSIASA. The propeptide occupies 28-111; sequence AEEAKEKYLI…IEEDAEVTTM (84 aa). Positions 34-111 constitute an Inhibitor I9 domain; sequence KYLIGFNEQE…IEEDAEVTTM (78 aa). Gln113 is a binding site for Ca(2+). The Peptidase S8 domain maps to 116-379; the sequence is PWGISRVQAP…SGLVNAEAAT (264 aa). The active-site Charge relay system is the Asp143. Asp151 provides a ligand contact to Ca(2+). The Charge relay system role is filled by His173. Leu184, Asn186, Ile188, Val190, Ala274, Tyr276, Ala279, and Asp302 together coordinate Ca(2+). Catalysis depends on Ser326, which acts as the Charge relay system.

Belongs to the peptidase S8 family. Monomer. Requires Ca(2+) as cofactor.

Its subcellular location is the secreted. With respect to regulation, activity is inhibited by phenylmethylsulfonyl fluoride and chymostatin. Its function is as follows. Alkaline serine protease that cleaves various substrates, including N-succinyl-Ala-Ala-Pro-Phe-pNA, N-succinyl-Ala-Ala-Pro-MetpNA, oxidized insulin B chain, casein, hemoglobin and scleroproteins, such as keratin, alpha-keratin and elastin. In Shouchella clausii (strain KSM-K16) (Alkalihalobacillus clausii), this protein is M-protease (aprE).